The primary structure comprises 247 residues: Proteasome subunit alpha type-7-B (247 aa).

The protein belongs to the peptidase T1A family. The 26S proteasome consists of a 20S proteasome core and two 19S regulatory subunits. The 20S proteasome core is composed of 28 subunits that are arranged in four stacked rings, resulting in a barrel-shaped structure. The two end rings are each formed by seven alpha subunits, and the two central rings are each formed by seven beta subunits. The catalytic chamber with the active sites is on the inside of the barrel. Post-translationally, phosphorylated in G2 phase.

Its subcellular location is the cytoplasm. It localises to the nucleus. Its function is as follows. The proteasome is a multicatalytic proteinase complex which is characterized by its ability to cleave peptides with Arg, Phe, Tyr, Leu, and Glu adjacent to the leaving group at neutral or slightly basic pH. The proteasome has an ATP-dependent proteolytic activity. This chain is Proteasome subunit alpha type-7-B (psma7-b), found in Xenopus laevis (African clawed frog).